The sequence spans 445 residues: uncharacterized protein (445 aa).

Residue His66 coordinates Zn(2+). The Proton acceptor role is filled by Glu69. His70 and Glu146 together coordinate Zn(2+). Residues 232–251 form a disordered region; the sequence is GRQSAPPRKSTGRINGGPAL.

This sequence belongs to the peptidase M16 family. Zn(2+) is required as a cofactor.

This is an uncharacterized protein from Mycobacterium leprae (strain TN).